Here is a 114-residue protein sequence, read N- to C-terminus: Large ribosomal subunit protein P2 (114 aa).

The interval 84–114 (TDALQAGSKKGETKEGPKEESDEDMGFGLFD) is disordered. Basic and acidic residues predominate over residues 92–102 (KKGETKEGPKE).

This sequence belongs to the eukaryotic ribosomal protein P1/P2 family. P1 and P2 exist as dimers at the large ribosomal subunit. Phosphorylated.

Functionally, plays an important role in the elongation step of protein synthesis. This Brugia malayi (Filarial nematode worm) protein is Large ribosomal subunit protein P2 (rpp-2).